We begin with the raw amino-acid sequence, 338 residues long: Cap-specific mRNA (nucleoside-2'-O-)-methyltransferase (338 aa).

Tyrosine 22 serves as a coordination point for mRNA. S-adenosyl-L-methionine is bound by residues glutamine 39, tyrosine 66, glycine 68, glycine 72, aspartate 95, arginine 97, valine 116, and aspartate 138. The binding to NPH-I stretch occupies residues 169–249; it reads PAASSLKWRC…NKIIRNRIII (81 aa). The binding to Rap94 stretch occupies residues 169 to 333; the sequence is PAASSLKWRC…NTKKSVRGNK (165 aa). Lysine 175 serves as the catalytic For methyltransferase activity. MRNA is bound by residues 177–180, aspartate 182, 205–207, and glutamate 233; these read RCPF and SAE. Residues 305 to 338 are disordered; it reads HHEPTQRKVPSKNTMLKSRNTKKSVRGNKQGRRT. Basic residues predominate over residues 323–338; the sequence is RNTKKSVRGNKQGRRT.

The protein belongs to the class I-like SAM-binding methyltransferase superfamily. Poxvirus/kinetoplastid 2'-O-MTase family. In terms of assembly, interacts with poly(A) polymerase catalytic subunit OPG063. Interacts with OPG109 and OPG123; these interactions might help linking transcription to capping and polyadenylation.

It is found in the virion. It catalyses the reaction a 5'-end (N(7)-methyl 5'-triphosphoguanosine)-ribonucleoside in mRNA + S-adenosyl-L-methionine = a 5'-end (N(7)-methyl 5'-triphosphoguanosine)-(2'-O-methyl-ribonucleoside) in mRNA + S-adenosyl-L-homocysteine + H(+). Its function is as follows. Displays methyltransferase, positive regulation of the poly(A) polymerase and transcription elongation activities. Involved in the modification of both mRNA ends and in intermediate and late gene positive transcription elongation. At the mRNAs 5' end, methylates the ribose 2' OH group of the first transcribed nucleotide, thereby producing a 2'-O-methylpurine cap. At the 3' end, functions as a processivity factor which stimulates the activity of the viral poly(A) polymerase OPG063 that creates mRNA's poly(A) tail. In the presence of OPG102, OPG063 does not dissociate from the RNA allowing tail elongation to around 250 adenylates. The sequence is that of Cap-specific mRNA (nucleoside-2'-O-)-methyltransferase (OPG102) from Oryctolagus cuniculus (Rabbit).